We begin with the raw amino-acid sequence, 198 residues long: Undecaprenyl phosphate transporter A (198 aa).

5 consecutive transmembrane segments (helical) span residues 15-35, 47-67, 107-127, 135-155, and 169-189; these read MGYA…EIVL, IGFI…QIFI, VVFS…PAGI, FVVL…YLGI, and GTYT…YFVI.

It belongs to the DedA family.

It localises to the cell membrane. Flippase that catalyzes the transport of undecaprenyl phosphate (UndP) across the cytoplasmic membrane, from the external side to the cytoplasmic side. Is involved in UndP recycling during peptidoglycan synthesis. In Bacillus subtilis (strain 168), this protein is Undecaprenyl phosphate transporter A.